The following is a 57-amino-acid chain: Phosphatase RapH inhibitor (57 aa).

2 consecutive propeptides follow at residues 1-34 and 41-57; these read MPIKKKVMMCLAVTLVFGSMSFPTLTNSGGFKES and YIDHSPYKLSDQKKALS. Residues 26–57 are disordered; the sequence is TNSGGFKESTDRNTTYIDHSPYKLSDQKKALS.

Belongs to the Phr family. In terms of processing, contains a predicted signal peptide cleavage site in the N-terminal region, however the propeptide is probably only subject to processing events at the ends of the mature peptide.

It localises to the secreted. Its subcellular location is the cytoplasm. Its function is as follows. Signaling molecule involved the regulation of both sporulation and competence. Secreted during production, but the mature peptide acts intracellularly, indicating that it needs to be imported into the cell to function. Acts by inhibiting RapH activity. Can inhibit both RapH activities, the dephosphorylation of Spo0F and the sequestration of ComA. The sequence is that of Phosphatase RapH inhibitor (phrH) from Bacillus subtilis (strain 168).